Here is a 512-residue protein sequence, read N- to C-terminus: Maturase K (512 aa).

The protein belongs to the intron maturase 2 family. MatK subfamily.

The protein resides in the plastid. The protein localises to the chloroplast. Usually encoded in the trnK tRNA gene intron. Probably assists in splicing its own and other chloroplast group II introns. The chain is Maturase K from Oenothera argillicola (Appalachian evening primrose).